Reading from the N-terminus, the 164-residue chain is Peptidyl-prolyl cis-trans isomerase A (164 aa).

Met1 is modified (N-acetylmethionine). Val2 is modified (N-acetylvaline; in Peptidyl-prolyl cis-trans isomerase A, N-terminally processed). Positions 7–163 constitute a PPIase cyclophilin-type domain; the sequence is FFDIAVDGEP…KKITIADCGQ (157 aa). Lys28 is subject to N6-acetyllysine; alternate. Residue Lys28 forms a Glycyl lysine isopeptide (Lys-Gly) (interchain with G-Cter in SUMO2); alternate linkage. Residue Lys28 forms a Glycyl lysine isopeptide (Lys-Gly) (interchain with G-Cter in ubiquitin); alternate linkage. N6-acetyllysine is present on residues Lys44 and Lys76. Phosphoserine is present on Ser77. Lys82 is modified (N6-acetyllysine; alternate). Lys82 participates in a covalent cross-link: Glycyl lysine isopeptide (Lys-Gly) (interchain with G-Cter in SUMO2); alternate. Thr93 is subject to Phosphothreonine. A glycan (N-linked (GlcNAc...) asparagine) is linked at Asn108. An N6-acetyllysine mark is found at Lys125, Lys131, and Lys133.

It belongs to the cyclophilin-type PPIase family. PPIase A subfamily. Interacts with protein phosphatase PPP3CA/calcineurin A. Interacts with isoform 2 of BSG/CD147. Interacts with FOXO1; the interaction promotes FOXO1 dephosphorylation, nuclear accumulation and transcriptional activity. Interacts with integrin ITGA2B:ITGB3; the interaction is ROS and peptidyl-prolyl cis-trans isomerase (PPIase) activity-dependent and is increased in the presence of thrombin. Interacts with MAP3K5. Interacts with TARDBP; the interaction is dependent on the RNA-binding activity of TARDBP and the PPIase activity of PPIA/CYPA and the acetylation of PPIA/CYPA at Lys-125 favors the interaction. Interacts with HNRNPA1, HNRNPA2B1, HNRNPC, RBMX, HNRNPK and HNRNPM. Acetylation at Lys-125 markedly inhibits catalysis of cis to trans isomerization. PPIA acetylation also antagonizes the immunosuppressive effects of cyclosporine by inhibiting the sequential steps of cyclosporine binding and calcineurin inhibition. Acetylation at Lys-125 favors the interaction with TARDBP.

It localises to the cytoplasm. The protein localises to the secreted. The protein resides in the nucleus. The enzyme catalyses [protein]-peptidylproline (omega=180) = [protein]-peptidylproline (omega=0). Its activity is regulated as follows. Binds cyclosporin A (CsA). CsA mediates some of its effects via an inhibitory action on PPIase. Functionally, catalyzes the cis-trans isomerization of proline imidic peptide bonds in oligopeptides. Exerts a strong chemotactic effect on leukocytes partly through activation of one of its membrane receptors BSG/CD147, initiating a signaling cascade that culminates in MAPK/ERK activation. Activates endothelial cells (ECs) in a proinflammatory manner by stimulating activation of NF-kappa-B and ERK, JNK and p38 MAP-kinases and by inducing expression of adhesion molecules including SELE and VCAM1. Induces apoptosis in ECs by promoting the FOXO1-dependent expression of CCL2 and BCL2L11 which are involved in EC chemotaxis and apoptosis. In response to oxidative stress, initiates proapoptotic and antiapoptotic signaling in ECs via activation of NF-kappa-B and AKT1 and up-regulation of antiapoptotic protein BCL2. Negatively regulates MAP3K5/ASK1 kinase activity, autophosphorylation and oxidative stress-induced apoptosis mediated by MAP3K5/ASK1. Necessary for the assembly of TARDBP in heterogeneous nuclear ribonucleoprotein (hnRNP) complexes and regulates TARDBP binding to RNA UG repeats and TARDBP-dependent expression of HDAC6, ATG7 and VCP which are involved in clearance of protein aggregates. Plays an important role in platelet activation and aggregation. Regulates calcium mobilization and integrin ITGA2B:ITGB3 bidirectional signaling via increased ROS production as well as by facilitating the interaction between integrin and the cell cytoskeleton. Binds heparan sulfate glycosaminoglycans. This Saguinus oedipus (Cotton-top tamarin) protein is Peptidyl-prolyl cis-trans isomerase A (PPIA).